Consider the following 444-residue polypeptide: tRNA-2-methylthio-N(6)-dimethylallyladenosine synthase (444 aa).

The MTTase N-terminal domain maps to 3–117 (RGLYIESYGC…LPELIMKVKR (115 aa)). Residues Cys-12, Cys-48, Cys-80, Cys-155, Cys-159, and Cys-162 each contribute to the [4Fe-4S] cluster site. The region spanning 141–374 (ANGGVSAYVS…LLTKQQLQFN (234 aa)) is the Radical SAM core domain. In terms of domain architecture, TRAM spans 375 to 441 (KSMEGRVMDV…QNSLEGTVLS (67 aa)).

The protein belongs to the methylthiotransferase family. MiaB subfamily. As to quaternary structure, monomer. Requires [4Fe-4S] cluster as cofactor.

It is found in the cytoplasm. The enzyme catalyses N(6)-dimethylallyladenosine(37) in tRNA + (sulfur carrier)-SH + AH2 + 2 S-adenosyl-L-methionine = 2-methylsulfanyl-N(6)-dimethylallyladenosine(37) in tRNA + (sulfur carrier)-H + 5'-deoxyadenosine + L-methionine + A + S-adenosyl-L-homocysteine + 2 H(+). Functionally, catalyzes the methylthiolation of N6-(dimethylallyl)adenosine (i(6)A), leading to the formation of 2-methylthio-N6-(dimethylallyl)adenosine (ms(2)i(6)A) at position 37 in tRNAs that read codons beginning with uridine. The sequence is that of tRNA-2-methylthio-N(6)-dimethylallyladenosine synthase from Anaplasma phagocytophilum (strain HZ).